The sequence spans 259 residues: Exotoxin A regulatory protein (259 aa).

It localises to the cell inner membrane. In terms of biological role, positive regulation of toxA gene transcription. The polypeptide is Exotoxin A regulatory protein (toxR) (Pseudomonas aeruginosa (strain ATCC 15692 / DSM 22644 / CIP 104116 / JCM 14847 / LMG 12228 / 1C / PRS 101 / PAO1)).